We begin with the raw amino-acid sequence, 195 residues long: Large ribosomal subunit protein uL18 (195 aa).

This sequence belongs to the universal ribosomal protein uL18 family. Part of the 50S ribosomal subunit. Contacts the 5S and 23S rRNAs.

This is one of the proteins that bind and probably mediate the attachment of the 5S RNA into the large ribosomal subunit, where it forms part of the central protuberance. This is Large ribosomal subunit protein uL18 from Methanococcus vannielii.